We begin with the raw amino-acid sequence, 489 residues long: Probable cytosol aminopeptidase (489 aa).

Residues Lys-254 and Asp-259 each coordinate Mn(2+). Lys-266 is a catalytic residue. Mn(2+)-binding residues include Asp-277, Asp-336, and Glu-338. Residue Arg-340 is part of the active site.

The protein belongs to the peptidase M17 family. Requires Mn(2+) as cofactor.

The protein localises to the cytoplasm. It carries out the reaction Release of an N-terminal amino acid, Xaa-|-Yaa-, in which Xaa is preferably Leu, but may be other amino acids including Pro although not Arg or Lys, and Yaa may be Pro. Amino acid amides and methyl esters are also readily hydrolyzed, but rates on arylamides are exceedingly low.. It catalyses the reaction Release of an N-terminal amino acid, preferentially leucine, but not glutamic or aspartic acids.. Presumably involved in the processing and regular turnover of intracellular proteins. Catalyzes the removal of unsubstituted N-terminal amino acids from various peptides. In Cereibacter sphaeroides (strain ATCC 17025 / ATH 2.4.3) (Rhodobacter sphaeroides), this protein is Probable cytosol aminopeptidase.